Here is a 309-residue protein sequence, read N- to C-terminus: Glycine-rich RNA-binding protein 3, mitochondrial (309 aa).

A mitochondrion-targeting transit peptide spans 1–37 (MAFLSKFGNILKQTTNKQLNAQVSLSSPSLFQAIRCM). In terms of domain architecture, RRM spans 40–118 (SKLFIGGMAY…RVVKVNYAND (79 aa)). The interval 247 to 309 (FAGDSQFGGS…GEFEDVAKRA (63 aa)) is disordered. The span at 258-273 (VGNSSQFGGDNTQFTA) shows a compositional bias: polar residues.

The protein belongs to the GR-RBP family. In terms of assembly, homodimer. Interacts with ORRM2 and MORF8/RIP1. Interacts with RBG5/ORRM4. Binds to RBG2/ORRM5.

Its subcellular location is the mitochondrion. Possibly has a role in RNA transcription or processing during stress. Involved in C-to-U editing of mitochondrial RNA. Functions as a minor mitochondrial editing factor. Controls 6 percent of the mitochondrial editing sites. This is Glycine-rich RNA-binding protein 3, mitochondrial from Arabidopsis thaliana (Mouse-ear cress).